A 251-amino-acid chain; its full sequence is Xylose/arabinose import ATP-binding protein XylG (251 aa).

The 237-residue stretch at Leu5–Ala241 folds into the ABC transporter domain. Residue Gly37–Ser44 participates in ATP binding.

It belongs to the ABC transporter superfamily. As to quaternary structure, the complex is composed of two ATP-binding proteins (XylG), two transmembrane proteins (XylH) and a solute-binding protein (XylF).

It is found in the cell membrane. It catalyses the reaction D-xylose(out) + ATP + H2O = D-xylose(in) + ADP + phosphate + H(+). It carries out the reaction L-arabinose(out) + ATP + H2O = L-arabinose(in) + ADP + phosphate + H(+). Its function is as follows. Part of the ABC transporter complex XylFGH involved in the uptake of xylose and arabinose. Responsible for energy coupling to the transport system. The polypeptide is Xylose/arabinose import ATP-binding protein XylG (Sulfolobus acidocaldarius (strain ATCC 33909 / DSM 639 / JCM 8929 / NBRC 15157 / NCIMB 11770)).